We begin with the raw amino-acid sequence, 211 residues long: Peptide methionine sulfoxide reductase MsrA (211 aa).

The active site involves Cys60.

Belongs to the MsrA Met sulfoxide reductase family.

It catalyses the reaction L-methionyl-[protein] + [thioredoxin]-disulfide + H2O = L-methionyl-(S)-S-oxide-[protein] + [thioredoxin]-dithiol. The catalysed reaction is [thioredoxin]-disulfide + L-methionine + H2O = L-methionine (S)-S-oxide + [thioredoxin]-dithiol. Functionally, has an important function as a repair enzyme for proteins that have been inactivated by oxidation. Catalyzes the reversible oxidation-reduction of methionine sulfoxide in proteins to methionine. The sequence is that of Peptide methionine sulfoxide reductase MsrA from Methanosarcina mazei (strain ATCC BAA-159 / DSM 3647 / Goe1 / Go1 / JCM 11833 / OCM 88) (Methanosarcina frisia).